The chain runs to 454 residues: Chromosomal replication initiator protein DnaA (454 aa).

Residues 1-81 (MNNSLWQQCA…PNVVLKVGEA (81 aa)) form a domain I, interacts with DnaA modulators region. Residues 79–110 (GEASPTQRDSGSPQRAAATRRKTPNFSSGNTD) are disordered. Residues 81–117 (ASPTQRDSGSPQRAAATRRKTPNFSSGNTDVEVPFES) are domain II. A compositionally biased stretch (polar residues) spans 82–91 (SPTQRDSGSP). The tract at residues 118–334 (NIHPEYTFDN…GALNRVVANV (217 aa)) is domain III, AAA+ region. ATP-binding residues include G162, G164, K165, and T166. A domain IV, binds dsDNA region spans residues 335-454 (QLTGRPITID…YRNLIRTLSS (120 aa)).

Belongs to the DnaA family. As to quaternary structure, oligomerizes as a right-handed, spiral filament on DNA at oriC.

The protein resides in the cytoplasm. Its function is as follows. Plays an essential role in the initiation and regulation of chromosomal replication. ATP-DnaA binds to the origin of replication (oriC) to initiate formation of the DNA replication initiation complex once per cell cycle. Binds the DnaA box (a 9 base pair repeat at the origin) and separates the double-stranded (ds)DNA. Forms a right-handed helical filament on oriC DNA; dsDNA binds to the exterior of the filament while single-stranded (ss)DNA is stabiized in the filament's interior. The ATP-DnaA-oriC complex binds and stabilizes one strand of the AT-rich DNA unwinding element (DUE), permitting loading of DNA polymerase. After initiation quickly degrades to an ADP-DnaA complex that is not apt for DNA replication. Binds acidic phospholipids. This chain is Chromosomal replication initiator protein DnaA, found in Idiomarina loihiensis (strain ATCC BAA-735 / DSM 15497 / L2-TR).